The chain runs to 250 residues: Biosynthetic peptidoglycan transglycosylase (250 aa).

A helical membrane pass occupies residues 15-35 (AVLLFFVSSLGFVLLYRFVPV).

This sequence belongs to the glycosyltransferase 51 family.

It localises to the cell inner membrane. The catalysed reaction is [GlcNAc-(1-&gt;4)-Mur2Ac(oyl-L-Ala-gamma-D-Glu-L-Lys-D-Ala-D-Ala)](n)-di-trans,octa-cis-undecaprenyl diphosphate + beta-D-GlcNAc-(1-&gt;4)-Mur2Ac(oyl-L-Ala-gamma-D-Glu-L-Lys-D-Ala-D-Ala)-di-trans,octa-cis-undecaprenyl diphosphate = [GlcNAc-(1-&gt;4)-Mur2Ac(oyl-L-Ala-gamma-D-Glu-L-Lys-D-Ala-D-Ala)](n+1)-di-trans,octa-cis-undecaprenyl diphosphate + di-trans,octa-cis-undecaprenyl diphosphate + H(+). Its pathway is cell wall biogenesis; peptidoglycan biosynthesis. Peptidoglycan polymerase that catalyzes glycan chain elongation from lipid-linked precursors. In Bdellovibrio bacteriovorus (strain ATCC 15356 / DSM 50701 / NCIMB 9529 / HD100), this protein is Biosynthetic peptidoglycan transglycosylase.